The following is a 239-amino-acid chain: Fatty acid metabolism regulator protein (239 aa).

The region spanning 6-74 (QSPAGFAEEY…HGKPTKVNNF (69 aa)) is the HTH gntR-type domain. A DNA-binding region (H-T-H motif) is located at residues 34-53 (ERELSELIGVTRTTLREVLQ).

Homodimer.

Its subcellular location is the cytoplasm. Functionally, multifunctional regulator of fatty acid metabolism. Represses transcription of at least eight genes required for fatty acid transport and beta-oxidation including fadA, fadB, fadD, fadL and fadE. Activates transcription of at least three genes required for unsaturated fatty acid biosynthesis: fabA, fabB and iclR, the gene encoding the transcriptional regulator of the aceBAK operon encoding the glyoxylate shunt enzymes. Binding of FadR is specifically inhibited by long chain fatty acyl-CoA compounds. This chain is Fatty acid metabolism regulator protein, found in Salmonella typhimurium (strain LT2 / SGSC1412 / ATCC 700720).